Consider the following 184-residue polypeptide: Thymidine kinase (184 aa).

ATP contacts are provided by residues 10-17 (GPMYSGKT) and 83-86 (DEVQ). Residue glutamate 84 is the Proton acceptor of the active site. Positions 140, 143, 173, and 176 each coordinate Zn(2+).

The protein belongs to the thymidine kinase family. In terms of assembly, homotetramer.

It localises to the cytoplasm. It catalyses the reaction thymidine + ATP = dTMP + ADP + H(+). The sequence is that of Thymidine kinase from Thermotoga petrophila (strain ATCC BAA-488 / DSM 13995 / JCM 10881 / RKU-1).